A 325-amino-acid chain; its full sequence is Interleukin-10 receptor subunit beta (325 aa).

Positions 1 to 19 are cleaved as a signal peptide; that stretch reads MAWSLGSWLGGCLLVSALG. Topologically, residues 20-220 are extracellular; it reads MVPPPENVRM…QTTHDETVPS (201 aa). Fibronectin type-III domains lie at 23–111 and 114–216; these read PPEN…VDDT and GPPG…THDE. 4 N-linked (GlcNAc...) asparagine glycosylation sites follow: N49, N68, N102, and N161. A disulfide bond links C66 and C74. Residues C188 and C209 are joined by a disulfide bond. A helical membrane pass occupies residues 221 to 242; sequence WMVAVILMASVFMVCLALLGCF. The Cytoplasmic segment spans residues 243–325; that stretch reads ALLWCVYKKT…GTPPGQGPQS (83 aa). The tract at residues 301 to 325 is disordered; sequence DSESGKQNPGDSCSLGTPPGQGPQS. Polar residues predominate over residues 305 to 315; it reads GKQNPGDSCSL.

The protein belongs to the type II cytokine receptor family. As to quaternary structure, heterodimer with IFNLR1.

The protein resides in the membrane. Functionally, shared cell surface receptor required for the activation of five class 2 cytokines: IL10, IL22, IL26, IL28, and IFNL1. The IFNLR1/IL10RB dimer is a receptor for the cytokine ligands IFNL2 and IFNL3 and mediates their antiviral activity. The ligand/receptor complex stimulate the activation of the JAK/STAT signaling pathway leading to the expression of IFN-stimulated genes (ISG), which contribute to the antiviral state. This is Interleukin-10 receptor subunit beta (IL10RB) from Homo sapiens (Human).